We begin with the raw amino-acid sequence, 804 residues long: Ribonucleoside-diphosphate reductase large subunit (804 aa).

Positions 1–92 (MYVLNRKGEE…TDNLHKNTSD (92 aa)) constitute an ATP-cone domain. ATP contacts are provided by residues 5-6 (NR), 11-17 (EDISFDQ), Thr-53, and Asp-57. A GDP-binding site is contributed by Ser-216. The cysteines at positions 217 and 442 are disulfide-linked. DTTP is bound by residues 225-227 (DSI), Lys-242, Arg-255, and 262-263 (RG). A GDP-binding site is contributed by Asn-425. The active-site Proton acceptor is Asn-425. Cys-427 serves as the catalytic Cysteine radical intermediate. GDP is bound by residues Glu-429 and 603-606 (TAST). Glu-429 functions as the Proton acceptor in the catalytic mechanism.

Belongs to the ribonucleoside diphosphate reductase large chain family. In terms of assembly, heterodimer of a large and a small subunit.

The catalysed reaction is a 2'-deoxyribonucleoside 5'-diphosphate + [thioredoxin]-disulfide + H2O = a ribonucleoside 5'-diphosphate + [thioredoxin]-dithiol. Its activity is regulated as follows. Under complex allosteric control mediated by deoxynucleoside triphosphates and ATP binding to separate specificity and activation sites on the large subunit. The type of nucleotide bound at the specificity site determines substrate preference. It seems probable that ATP makes the enzyme reduce CDP and UDP, dGTP favors ADP reduction and dTTP favors GDP reduction. Stimulated by ATP and inhibited by dATP binding to the activity site. Its function is as follows. Provides the precursors necessary for DNA synthesis. Catalyzes the biosynthesis of deoxyribonucleotides from the corresponding ribonucleotides. The protein is Ribonucleoside-diphosphate reductase large subunit (RNR1) of Plasmodium falciparum (isolate FCR-3 / Gambia).